We begin with the raw amino-acid sequence, 280 residues long: GTP-binding protein rhoC (280 aa).

The segment at 13–59 is disordered; the sequence is TSRRHSLVTPPPSVAPRQNRMRSQSVRVSNGTVSTDNSMSSGRVSEA. Polar residues predominate over residues 33–59; that stretch reads MRSQSVRVSNGTVSTDNSMSSGRVSEA. 76 to 83 is a GTP binding site; the sequence is GDGGCGKT. The short motif at 98–106 is the Effector region element; that stretch reads YVPTVFENY. GTP contacts are provided by residues 125–129 and 183–186; these read DTAGQ and LKSD. The tract at residues 251–275 is disordered; that stretch reads WDTRLPSSSGKPGGKPIGGKKIKKR. Residue Cys-277 is modified to Cysteine methyl ester. Residue Cys-277 is the site of S-geranylgeranyl cysteine attachment. Positions 278 to 280 are cleaved as a propeptide — removed in mature form; sequence KIL.

Belongs to the small GTPase superfamily. Rho family.

It is found in the cell membrane. The protein is GTP-binding protein rhoC (rhoC) of Emericella nidulans (strain FGSC A4 / ATCC 38163 / CBS 112.46 / NRRL 194 / M139) (Aspergillus nidulans).